The primary structure comprises 340 residues: tRNA N6-adenosine threonylcarbamoyltransferase (340 aa).

Fe cation is bound by residues H113 and H117. Substrate contacts are provided by residues 135-139, D169, G182, D186, and N274; that span reads LVSGG. Position 302 (D302) interacts with Fe cation.

It belongs to the KAE1 / TsaD family. The cofactor is Fe(2+).

Its subcellular location is the cytoplasm. It carries out the reaction L-threonylcarbamoyladenylate + adenosine(37) in tRNA = N(6)-L-threonylcarbamoyladenosine(37) in tRNA + AMP + H(+). Its function is as follows. Required for the formation of a threonylcarbamoyl group on adenosine at position 37 (t(6)A37) in tRNAs that read codons beginning with adenine. Is involved in the transfer of the threonylcarbamoyl moiety of threonylcarbamoyl-AMP (TC-AMP) to the N6 group of A37, together with TsaE and TsaB. TsaD likely plays a direct catalytic role in this reaction. The polypeptide is tRNA N6-adenosine threonylcarbamoyltransferase (Mycolicibacterium smegmatis (strain ATCC 700084 / mc(2)155) (Mycobacterium smegmatis)).